Consider the following 744-residue polypeptide: Zinc finger protein 483 (744 aa).

Residues 52-134 form the SCAN box domain; the sequence is RQRFRWFCYS…TLIEDLTQML (83 aa). Residues 137 to 156 are disordered; sequence KDPVSQDSTVSQEENSKEDK. The KRAB domain maps to 170–241; the sequence is ITLKDVAVNF…EEVSKSSRLD (72 aa). 2 disordered regions span residues 263–308 and 350–385; these read ESQQ…SPFG and KEKTAGEKSRKSNDGGKVLSHSSALTEHQKRQKIHL. Positions 277 to 293 are enriched in polar residues; the sequence is NQGNSKGRVAQNKTLGS. Composition is skewed to basic and acidic residues over residues 298–308 and 350–363; these read KKFDPDKSPFG and KEKTAGEKSRKSND. 11 consecutive C2H2-type zinc fingers follow at residues 439–461, 467–489, 495–517, 523–545, 551–573, 579–601, 607–629, 635–657, 663–685, 691–713, and 719–741; these read HKCSKCGKAFGYSASLTKHRRIH, YMCNECGKAFSDSSSLTPHHRTH, FKCDDCGKGFTLSAHLIKHQRIH, YKCKDCGRPFSDSSSLIQHQRIH, YTCSNCGKSFSHSSSLSKHQRIH, YKCGECGKAFRQNSCLTRHQRIH, YLCNDCGMTFSHFTSVIYHQRLH, YKCNQCEKAFPTHSLLSRHQRIH, YKCKECGKSFSQSSSLNEHHRIH, YECNYCGATFSRSSILVEHLKIH, and YECNECEKTFKSNSGLIRHRGFH.

Belongs to the krueppel C2H2-type zinc-finger protein family.

It is found in the nucleus. Functionally, may be involved in transcriptional regulation. The protein is Zinc finger protein 483 (ZNF483) of Homo sapiens (Human).